The primary structure comprises 309 residues: Cysteinyl leukotriene receptor 2 (309 aa).

Residues 1–26 (MEVTGTPSSYSNRNCTIENFKKEFYP) lie on the Extracellular side of the membrane. Asn-14 carries N-linked (GlcNAc...) asparagine glycosylation. Residues 27-47 (IIYLIIFFWGALGNGFSIYVF) traverse the membrane as a helical segment. Residues 48–56 (LQTCKKSTS) are Cytoplasmic-facing. The chain crosses the membrane as a helical span at residues 57-77 (VNVFMLNLATSDFLFISTLPF). The Extracellular portion of the chain corresponds to 78–98 (RADYYFRGSNWIFGDLACRVM). Cys-95 and Cys-171 form a disulfide bridge. A helical membrane pass occupies residues 99-119 (SYSLYVNMYTSIYFLTVLSVV). The Cytoplasmic portion of the chain corresponds to 120–138 (RFLATVHPFRMFHVTSVRS). The chain crosses the membrane as a helical span at residues 139–159 (AWILCGIIWVFIMASSALLLV). Over 160–187 (NGQEEKDNIISCLELSPQKFKSLLIMNH) the chain is Extracellular. A helical membrane pass occupies residues 188 to 208 (IAVAVGFLLPFLTLTVCYLLI). The Cytoplasmic segment spans residues 209–229 (IRILLKAEIPESGPRAAHRKA). The helical transmembrane segment at 230–250 (LTTIVIAMITFLLCFLPYHAL) threads the bilayer. The Extracellular portion of the chain corresponds to 251 to 271 (RTLHLVTWDKDSCGDVLHKAT). The chain crosses the membrane as a helical span at residues 272–292 (VITLTMAAANSCFNPFLYYFA). At 293–309 (GENFKARLRAIFSKVHL) the chain is on the cytoplasmic side.

This sequence belongs to the G-protein coupled receptor 1 family. Widely expressed at low levels, with highest expression in the spleen, thymus and adrenal gland, and lower in the kidney, brain and peripheral blood leukocytes.

The protein resides in the cell membrane. Its function is as follows. Receptor for cysteinyl leukotrienes. The response is mediated via a G-protein that activates a phosphatidylinositol-calcium second messenger system. The rank order of affinities for the leukotrienes is LTC4 = LTD4 &gt;&gt; LTE4. This chain is Cysteinyl leukotriene receptor 2 (Cysltr2), found in Mus musculus (Mouse).